Reading from the N-terminus, the 361-residue chain is Alanine racemase (361 aa).

Lys34 functions as the Proton acceptor; specific for D-alanine in the catalytic mechanism. The residue at position 34 (Lys34) is an N6-(pyridoxal phosphate)lysine. A substrate-binding site is contributed by Arg129. Tyr256 (proton acceptor; specific for L-alanine) is an active-site residue. Position 304 (Met304) interacts with substrate.

This sequence belongs to the alanine racemase family. It depends on pyridoxal 5'-phosphate as a cofactor.

The catalysed reaction is L-alanine = D-alanine. Its pathway is amino-acid biosynthesis; D-alanine biosynthesis; D-alanine from L-alanine: step 1/1. In terms of biological role, catalyzes the interconversion of L-alanine and D-alanine. May also act on other amino acids. The protein is Alanine racemase (alr) of Corynebacterium glutamicum (strain R).